We begin with the raw amino-acid sequence, 352 residues long: Protein RecA (352 aa).

67–74 contacts ATP; it reads GPESSGKT. The disordered stretch occupies residues 332–352; sequence VKPADAESKEDSPKLKAVDGF. The span at 335 to 352 shows a compositional bias: basic and acidic residues; the sequence is ADAESKEDSPKLKAVDGF.

Belongs to the RecA family.

It localises to the cytoplasm. Functionally, can catalyze the hydrolysis of ATP in the presence of single-stranded DNA, the ATP-dependent uptake of single-stranded DNA by duplex DNA, and the ATP-dependent hybridization of homologous single-stranded DNAs. It interacts with LexA causing its activation and leading to its autocatalytic cleavage. The polypeptide is Protein RecA (Pseudarthrobacter chlorophenolicus (strain ATCC 700700 / DSM 12829 / CIP 107037 / JCM 12360 / KCTC 9906 / NCIMB 13794 / A6) (Arthrobacter chlorophenolicus)).